The chain runs to 72 residues: DNA-directed RNA polymerase subunit omega (72 aa).

It belongs to the RNA polymerase subunit omega family. As to quaternary structure, the RNAP catalytic core consists of 2 alpha, 1 beta, 1 beta' and 1 omega subunit. When a sigma factor is associated with the core the holoenzyme is formed, which can initiate transcription.

It catalyses the reaction RNA(n) + a ribonucleoside 5'-triphosphate = RNA(n+1) + diphosphate. In terms of biological role, promotes RNA polymerase assembly. Latches the N- and C-terminal regions of the beta' subunit thereby facilitating its interaction with the beta and alpha subunits. The polypeptide is DNA-directed RNA polymerase subunit omega (Clostridium botulinum (strain Langeland / NCTC 10281 / Type F)).